The following is a 344-amino-acid chain: tRNA N6-adenosine threonylcarbamoyltransferase (344 aa).

Residues His-112 and His-116 each coordinate Fe cation. Substrate-binding positions include 134–138 (LASGG), Asp-167, Gly-180, and Asn-280. Asp-308 lines the Fe cation pocket.

Belongs to the KAE1 / TsaD family. Requires Fe(2+) as cofactor.

The protein resides in the cytoplasm. The enzyme catalyses L-threonylcarbamoyladenylate + adenosine(37) in tRNA = N(6)-L-threonylcarbamoyladenosine(37) in tRNA + AMP + H(+). Functionally, required for the formation of a threonylcarbamoyl group on adenosine at position 37 (t(6)A37) in tRNAs that read codons beginning with adenine. Is involved in the transfer of the threonylcarbamoyl moiety of threonylcarbamoyl-AMP (TC-AMP) to the N6 group of A37, together with TsaE and TsaB. TsaD likely plays a direct catalytic role in this reaction. The sequence is that of tRNA N6-adenosine threonylcarbamoyltransferase from Rickettsia massiliae (strain Mtu5).